A 249-amino-acid chain; its full sequence is Small ribosomal subunit protein uS3 (249 aa).

A KH type-2 domain is found at 39–109; the sequence is IRTYVLARLK…EVKIDVVEVV (71 aa). The span at 226–239 shows a compositional bias: basic and acidic residues; the sequence is KERRNDAGARNRDS. The interval 226–249 is disordered; sequence KERRNDAGARNRDSRTKRRHRTKR. The segment covering 240-249 has biased composition (basic residues); the sequence is RTKRRHRTKR.

This sequence belongs to the universal ribosomal protein uS3 family. Part of the 30S ribosomal subunit. Forms a tight complex with proteins S10 and S14.

Its function is as follows. Binds the lower part of the 30S subunit head. Binds mRNA in the 70S ribosome, positioning it for translation. This chain is Small ribosomal subunit protein uS3, found in Pelodictyon phaeoclathratiforme (strain DSM 5477 / BU-1).